The following is a 544-amino-acid chain: Prolyl 4-hydroxylase subunit alpha-3 (544 aa).

Residues 1 to 19 (MGPGARLAALLAVLALGTG) form the signal peptide. A coiled-coil region spans residues 107 to 131 (LEASENIRALKDGYEKVEQDLPAFE). The TPR repeat unit spans residues 227–260 (EDALDHLAFAYFRAGNVSCALSLSREFLLYSPDN). Asn242 carries an N-linked (GlcNAc...) asparagine glycan. The 108-residue stretch at 422–529 (YAEYLQVVNY…KWVANKWIHE (108 aa)) folds into the Fe2OG dioxygenase domain. 2 residues coordinate Fe cation: His440 and Asp442. Asn482 carries an N-linked (GlcNAc...) asparagine glycan. His510 lines the Fe cation pocket. 2-oxoglutarate is bound at residue Lys520.

The protein belongs to the P4HA family. As to quaternary structure, heterotetramer of two alpha-3 chains and two beta chains (the beta chain is the multi-functional PDI). Fe(2+) serves as cofactor. L-ascorbate is required as a cofactor. In terms of processing, N-glycosylation plays no role in the catalytic activity. Highly expressed in placenta, liver and fetal skin. Weakly expressed in fetal epiphyseal cartilage, fetal liver, fibroblast, lung and skeletal muscle. Expressed also in fibrous cap of carotid atherosclerotic lesions.

It localises to the endoplasmic reticulum lumen. It catalyses the reaction L-prolyl-[collagen] + 2-oxoglutarate + O2 = trans-4-hydroxy-L-prolyl-[collagen] + succinate + CO2. Catalyzes the post-translational formation of 4-hydroxyproline in -Xaa-Pro-Gly- sequences in collagens and other proteins. The chain is Prolyl 4-hydroxylase subunit alpha-3 (P4HA3) from Homo sapiens (Human).